We begin with the raw amino-acid sequence, 228 residues long: Orotidine 5'-phosphate decarboxylase (228 aa).

Substrate-binding positions include aspartate 10, lysine 33, 60 to 69, threonine 116, arginine 178, glutamine 187, glycine 207, and arginine 208; that span reads DLKLYDIPHT. Residue lysine 62 is the Proton donor of the active site.

This sequence belongs to the OMP decarboxylase family. Type 1 subfamily. As to quaternary structure, homodimer.

It catalyses the reaction orotidine 5'-phosphate + H(+) = UMP + CO2. It functions in the pathway pyrimidine metabolism; UMP biosynthesis via de novo pathway; UMP from orotate: step 2/2. Its function is as follows. Catalyzes the decarboxylation of orotidine 5'-monophosphate (OMP) to uridine 5'-monophosphate (UMP). This Oenococcus oeni (strain ATCC BAA-331 / PSU-1) protein is Orotidine 5'-phosphate decarboxylase.